Consider the following 271-residue polypeptide: Cartilage-associated protein (271 aa).

The first 15 residues, 1 to 15 (MWRTLLAALLATAGA), serve as a signal peptide directing secretion. Asparagine 76 carries N-linked (GlcNAc...) asparagine glycosylation.

It belongs to the leprecan family. As to expression, found in articular chondrocytes. Expressed in a variety of tissues.

It is found in the secreted. Its subcellular location is the extracellular space. The protein resides in the extracellular matrix. In terms of biological role, necessary for efficient 3-hydroxylation of fibrillar collagen prolyl residues. This is Cartilage-associated protein (CRTAP) from Gallus gallus (Chicken).